The sequence spans 105 residues: MATLQQQKIRIRLKAFDRRLLDTSCDKIVDTANRTNAAAVGPIPLPTKRKIYCVLRSPHVDKDSREHFETRTHRRIIDIYQPSSKTIDALMKLDLPAGVDIEVKL.

It belongs to the universal ribosomal protein uS10 family. In terms of assembly, part of the 30S ribosomal subunit.

In terms of biological role, involved in the binding of tRNA to the ribosomes. This is Small ribosomal subunit protein uS10 from Synechocystis sp. (strain ATCC 27184 / PCC 6803 / Kazusa).